A 227-amino-acid chain; its full sequence is Eukaryotic translation initiation factor NCBP (227 aa).

The segment covering 1–22 (MEPAAEKREAEQEELQQQHDEP) has biased composition (basic and acidic residues). The segment at 1-43 (MEPAAEKREAEQEELQQQHDEPAVPSADDDEAEAEENERRNRE) is disordered. Residues 27–36 (ADDDEAEAEE) are compositionally biased toward acidic residues.

It belongs to the eukaryotic initiation factor 4E family. In terms of assembly, EIF4F is a multi-subunit complex, the composition of which varies with external and internal environmental conditions. It is composed of at least EIF4A, EIF4E and EIF4G. EIF4E is also known to interact with other partners. In higher plants two isoforms of EIF4F have been identified, named isoform EIF4F and isoform EIF(iso)4F. Isoform EIF4F has subunits p220 and p26, whereas isoform EIF(iso)4F has subunits p82 and p28.

Its function is as follows. Recognizes and binds the 7-methylguanosine-containing mRNA cap during an early step in the initiation of protein synthesis and facilitates ribosome binding by inducing the unwinding of the mRNAs secondary structures. In Oryza sativa subsp. japonica (Rice), this protein is Eukaryotic translation initiation factor NCBP (NCBP).